Here is a 58-residue protein sequence, read N- to C-terminus: UPF0391 membrane protein GM21_0108 (58 aa).

The next 2 membrane-spanning stretches (helical) occupy residues 4–24 (WALIFFIIAIIAAVFGFGGIA) and 33–53 (VLFYLFLVVAVVMLVSALLAG).

This sequence belongs to the UPF0391 family.

It is found in the cell membrane. The sequence is that of UPF0391 membrane protein GM21_0108 from Geobacter sp. (strain M21).